Here is a 435-residue protein sequence, read N- to C-terminus: Proline--tRNA ligase (435 aa).

Belongs to the class-II aminoacyl-tRNA synthetase family. ProS type 2 subfamily. As to quaternary structure, homodimer.

Its subcellular location is the cytoplasm. The enzyme catalyses tRNA(Pro) + L-proline + ATP = L-prolyl-tRNA(Pro) + AMP + diphosphate. Catalyzes the attachment of proline to tRNA(Pro) in a two-step reaction: proline is first activated by ATP to form Pro-AMP and then transferred to the acceptor end of tRNA(Pro). The sequence is that of Proline--tRNA ligase (proS) from Sulfurimonas denitrificans (strain ATCC 33889 / DSM 1251) (Thiomicrospira denitrificans (strain ATCC 33889 / DSM 1251)).